Consider the following 352-residue polypeptide: Alanine racemase (352 aa).

The Proton acceptor; specific for D-alanine role is filled by Lys-33. An N6-(pyridoxal phosphate)lysine modification is found at Lys-33. A substrate-binding site is contributed by Arg-129. Tyr-250 functions as the Proton acceptor; specific for L-alanine in the catalytic mechanism. Met-298 lines the substrate pocket.

It belongs to the alanine racemase family. It depends on pyridoxal 5'-phosphate as a cofactor.

The catalysed reaction is L-alanine = D-alanine. It participates in amino-acid biosynthesis; D-alanine biosynthesis; D-alanine from L-alanine: step 1/1. In terms of biological role, catalyzes the interconversion of L-alanine and D-alanine. May also act on other amino acids. The chain is Alanine racemase (alr) from Neisseria meningitidis serogroup A / serotype 4A (strain DSM 15465 / Z2491).